Reading from the N-terminus, the 482-residue chain is Zinc finger CCCH domain-containing protein 40 (482 aa).

The C3H1-type zinc finger occupies 157 to 184; the sequence is RNRAHVCSFYVRGECTRGAECPYRHEMP. In terms of domain architecture, RRM spans 228-301; it reads RTLYIGGLNN…IRLKLMWGKP (74 aa). Low complexity-rich tracts occupy residues 329–347 and 389–428; these read SQQQ…GQQQ and PGPQ…YGGY. The tract at residues 329–482 is disordered; sequence SQQQSGDQPQ…VPPPQQTTQN (154 aa). The segment covering 429-446 has biased composition (pro residues); that stretch reads MPPPRMPYPPPPQYPPYQ. The span at 452–466 shows a compositional bias: low complexity; sequence PAQSQASSSQQPAPA. The span at 473 to 482 shows a compositional bias: pro residues; the sequence is VPPPQQTTQN.

In Oryza sativa subsp. japonica (Rice), this protein is Zinc finger CCCH domain-containing protein 40.